A 1227-amino-acid chain; its full sequence is DNA-directed RNA polymerase subunit beta (1227 aa).

Belongs to the RNA polymerase beta chain family. In terms of assembly, the RNAP catalytic core consists of 2 alpha, 1 beta, 1 beta' and 1 omega subunit. When a sigma factor is associated with the core the holoenzyme is formed, which can initiate transcription.

It carries out the reaction RNA(n) + a ribonucleoside 5'-triphosphate = RNA(n+1) + diphosphate. In terms of biological role, DNA-dependent RNA polymerase catalyzes the transcription of DNA into RNA using the four ribonucleoside triphosphates as substrates. The sequence is that of DNA-directed RNA polymerase subunit beta from Chloroflexus aggregans (strain MD-66 / DSM 9485).